Here is a 385-residue protein sequence, read N- to C-terminus: DNA replication and repair protein RecF (385 aa).

30–37 (GPNGYGKT) serves as a coordination point for ATP.

It belongs to the RecF family.

Its subcellular location is the cytoplasm. Its function is as follows. The RecF protein is involved in DNA metabolism; it is required for DNA replication and normal SOS inducibility. RecF binds preferentially to single-stranded, linear DNA. It also seems to bind ATP. The chain is DNA replication and repair protein RecF from Mycobacterium tuberculosis (strain ATCC 25177 / H37Ra).